The chain runs to 236 residues: Rho-related GTP-binding protein RhoV (236 aa).

Positions 1–27 are disordered; the sequence is MPPRELSEAEPPPLRAPTPPPRRRSAP. Pro residues predominate over residues 10-20; that stretch reads EPPPLRAPTPP. Serine 25 is modified (phosphoserine). Residues 38 to 45, 85 to 89, and 143 to 146 each bind GTP; these read GDGAVGKS, DTAGQ, and TQAD. The S-palmitoyl cysteine moiety is linked to residue cysteine 234.

Belongs to the small GTPase superfamily. Rho family. As to quaternary structure, interacts with PAK2. Mg(2+) serves as cofactor. As to expression, highly expressed in pancreas, placenta, and fetal brain.

The protein localises to the cell membrane. Its subcellular location is the endosome membrane. Plays a role in the control of the actin cytoskeleton via activation of the JNK pathway. This is Rho-related GTP-binding protein RhoV from Homo sapiens (Human).